A 527-amino-acid chain; its full sequence is Flagellar radial spoke protein 5 (527 aa).

Residues 1-22 are disordered; that stretch reads MSEPGEEPVAAPAGPAPDPVLN. The stretch at 101–153 forms a coiled coil; that stretch reads RKWNELTIQAKQLEQEVAGLKGPDAEAKQAELENVKVQIADAEAAVAEVKQSF. R191 and R366 each carry asymmetric dimethylarginine.

Belongs to the aldo/keto reductase family. Asymmetrically dimethylated at Arg-191 and Arg-366 during flagellum resorption. Probably methylated by PRMT1.

It localises to the cytoplasm. It is found in the cytoskeleton. Its subcellular location is the flagellum axoneme. Flagellar radial spokes contribute to the regulation of dynein arm activity and thus the pattern of flagellar bending. They consist of a thin stalk, which is attached to the a subfiber of the outer doublet microtubule, and a bulbous head, which is attached to the stalk and appears to interact with the projections from the central pair of microtubules. This is Flagellar radial spoke protein 5 from Chlamydomonas reinhardtii (Chlamydomonas smithii).